The chain runs to 639 residues: Extracellular metalloproteinase NpIII (639 aa).

Residues methionine 1 to valine 16 form the signal peptide. A propeptide spanning residues cysteine 17–glutamate 245 is cleaved from the precursor. N-linked (GlcNAc...) asparagine glycosylation is found at asparagine 287, asparagine 320, asparagine 336, and asparagine 368. Histidine 429 provides a ligand contact to Zn(2+). The active site involves glutamate 430. Position 433 (histidine 433) interacts with Zn(2+). Asparagine 509 is a glycosylation site (N-linked (GlcNAc...) asparagine).

This sequence belongs to the peptidase M36 family. It depends on Zn(2+) as a cofactor.

The protein localises to the secreted. Functionally, secreted metalloproteinase that allows assimilation of proteinaceous substrates. This chain is Extracellular metalloproteinase NpIII (NpIII), found in Aspergillus oryzae (strain ATCC 42149 / RIB 40) (Yellow koji mold).